The following is a 521-amino-acid chain: GMP synthase [glutamine-hydrolyzing] (521 aa).

Positions 9-203 (KILILDFGSQ…VSDICQCKKN (195 aa)) constitute a Glutamine amidotransferase type-1 domain. Cys86 functions as the Nucleophile in the catalytic mechanism. Catalysis depends on residues His177 and Glu179. The GMPS ATP-PPase domain occupies 204–396 (WTTDNIITKL…LGLPTHMLNC (193 aa)). 231 to 237 (SGGVDSS) contacts ATP.

In terms of assembly, homodimer.

It carries out the reaction XMP + L-glutamine + ATP + H2O = GMP + L-glutamate + AMP + diphosphate + 2 H(+). It participates in purine metabolism; GMP biosynthesis; GMP from XMP (L-Gln route): step 1/1. Its function is as follows. Catalyzes the synthesis of GMP from XMP. The protein is GMP synthase [glutamine-hydrolyzing] of Vesicomyosocius okutanii subsp. Calyptogena okutanii (strain HA).